Consider the following 314-residue polypeptide: Replication initiation protein (314 aa).

Over residues 1–18 the composition is skewed to basic and acidic residues; the sequence is MSKKAEEIQAKQSLEKEN. A disordered region spans residues 1 to 25; the sequence is MSKKAEEIQAKQSLEKENSNFSKTG.

This sequence belongs to the plasmid replication initiation factor family.

Functionally, this protein is probably a specific topoisomerase involved in initiating replication. This protein is specifically required and may be rate-limiting for replication of the plasmid in vivo. The polypeptide is Replication initiation protein (repE) (Staphylococcus aureus).